A 500-amino-acid polypeptide reads, in one-letter code: MNSHTKQKIGVFGLGKTGISVYEELQNKYDVIVYDDLKANRDIFEELYSKTAIAALSDSRWQNLDTIVLSPGIPLTHEIVNIAKSFNIPITSDIDLLFAKSKNLKFIAITGTNGKSTTTALISHILNSSGLDYPVAGNIGVSALQAKASKDGYVLELSSFQLDLVKTFTAKIAVLLNITPDHLDRHQDMTCYIAAKSKIFDRMDQESYAVINIDNDYCREVFIKLQQEQRIKLIPFSVAQILENGISVVDDKISANFCDDISFELQHNSESFRQDEFQGEPAEPECIKIREHRQDLQNSLVSSFMHYAVPFNKNLQGVHNCENIAASYAVAKIIGVEPKKILESISSFQSLPHRMQYIGSINNISFYNDSKATNAISAVQSIKALDNIYWLAGGIPKEGGIEEIKPYFSHIKKAYFYGQAKEIFANTAKNIVDFVICDNLEQAFDLAYKDAVGDNAEIKNILLAPSCSSYDQFKNFEERGELFIKLCSILSLRGLITGSS.

111–117 provides a ligand contact to ATP; sequence GTNGKST. Residues 260–306 form the RPE3 insert domain; that stretch reads DISFELQHNSESFRQDEFQGEPAEPECIKIREHRQDLQNSLVSSFMH.

The protein belongs to the MurCDEF family.

Its subcellular location is the cytoplasm. It carries out the reaction UDP-N-acetyl-alpha-D-muramoyl-L-alanine + D-glutamate + ATP = UDP-N-acetyl-alpha-D-muramoyl-L-alanyl-D-glutamate + ADP + phosphate + H(+). It participates in cell wall biogenesis; peptidoglycan biosynthesis. Cell wall formation. Catalyzes the addition of glutamate to the nucleotide precursor UDP-N-acetylmuramoyl-L-alanine (UMA). This is UDP-N-acetylmuramoylalanine--D-glutamate ligase (murD) from Rickettsia conorii (strain ATCC VR-613 / Malish 7).